Here is a 673-residue protein sequence, read N- to C-terminus: Putative lipase atg15 (673 aa).

Residues 1 to 7 (MPRKRSR) are Cytoplasmic-facing. The helical; Signal-anchor for type II membrane protein transmembrane segment at 8–28 (FELSIHSLLLSVAVLSGAAYA) threads the bilayer. Over 29-673 (SGYYPPSQQV…AVTSAPTPTS (645 aa)) the chain is Lumenal. N-linked (GlcNAc...) asparagine glycosylation is found at Asn156, Asn191, Asn213, Asn271, and Asn295. Ser311 (charge relay system) is an active-site residue. N-linked (GlcNAc...) asparagine glycosylation is present at Asn457.

The protein belongs to the AB hydrolase superfamily. Lipase family. Binds to both phosphatidylinositol (PI) and phosphatidylinositol 3,5-bisphosphate (PIP2).

It localises to the endosome. It is found in the multivesicular body membrane. The protein localises to the prevacuolar compartment membrane. The catalysed reaction is a triacylglycerol + H2O = a diacylglycerol + a fatty acid + H(+). In terms of biological role, lipase which is essential for lysis of subvacuolar cytoplasm to vacuole targeted bodies and intravacuolar autophagic bodies. Involved in the lysis of intravacuolar multivesicular body (MVB) vesicles. The intravacuolar membrane disintegration by atg15 is critical to life span extension. The polypeptide is Putative lipase atg15 (atg15) (Penicillium rubens (strain ATCC 28089 / DSM 1075 / NRRL 1951 / Wisconsin 54-1255) (Penicillium chrysogenum)).